Reading from the N-terminus, the 138-residue chain is Small ribosomal subunit protein uS8 (138 aa).

It belongs to the universal ribosomal protein uS8 family. As to quaternary structure, part of the 30S ribosomal subunit. Contacts proteins S5 and S12.

Its function is as follows. One of the primary rRNA binding proteins, it binds directly to 16S rRNA central domain where it helps coordinate assembly of the platform of the 30S subunit. In Thermus thermophilus (strain ATCC BAA-163 / DSM 7039 / HB27), this protein is Small ribosomal subunit protein uS8 (rpsH).